Here is a 450-residue protein sequence, read N- to C-terminus: tRNA modification GTPase MnmE (450 aa).

The (6S)-5-formyl-5,6,7,8-tetrahydrofolate site is built by Arg-24, Glu-82, and Lys-121. One can recognise a TrmE-type G domain in the interval 218 to 375 (GMHVVLVGQP…LRQVLLEAVG (158 aa)). Asn-228 lines the K(+) pocket. GTP is bound by residues 228-233 (NVGKSS), 247-253 (TDIAGTT), 272-275 (DTAG), and 356-358 (SAR). Ser-232 provides a ligand contact to Mg(2+). The K(+) site is built by Thr-247, Ile-249, and Thr-252. Thr-253 is a Mg(2+) binding site. (6S)-5-formyl-5,6,7,8-tetrahydrofolate is bound at residue Lys-450.

Belongs to the TRAFAC class TrmE-Era-EngA-EngB-Septin-like GTPase superfamily. TrmE GTPase family. Homodimer. Heterotetramer of two MnmE and two MnmG subunits. It depends on K(+) as a cofactor.

It is found in the cytoplasm. In terms of biological role, exhibits a very high intrinsic GTPase hydrolysis rate. Involved in the addition of a carboxymethylaminomethyl (cmnm) group at the wobble position (U34) of certain tRNAs, forming tRNA-cmnm(5)s(2)U34. The protein is tRNA modification GTPase MnmE of Laribacter hongkongensis (strain HLHK9).